The sequence spans 779 residues: Endonuclease MutS2 (779 aa).

Position 328 to 335 (328 to 335) interacts with ATP; that stretch reads GPNTGGKT. The Smr domain maps to 704–779; the sequence is LDLRGKRYEE…GSGATIVTLG (76 aa).

The protein belongs to the DNA mismatch repair MutS family. MutS2 subfamily. Homodimer. Binds to stalled ribosomes, contacting rRNA.

Its function is as follows. Endonuclease that is involved in the suppression of homologous recombination and thus may have a key role in the control of bacterial genetic diversity. In terms of biological role, acts as a ribosome collision sensor, splitting the ribosome into its 2 subunits. Detects stalled/collided 70S ribosomes which it binds and splits by an ATP-hydrolysis driven conformational change. Acts upstream of the ribosome quality control system (RQC), a ribosome-associated complex that mediates the extraction of incompletely synthesized nascent chains from stalled ribosomes and their subsequent degradation. Probably generates substrates for RQC. The polypeptide is Endonuclease MutS2 (Streptococcus agalactiae serotype III (strain NEM316)).